A 256-amino-acid chain; its full sequence is Post-translational flagellin modification protein A (256 aa).

Position 145 (Ser145) interacts with substrate. Residue Tyr168 is the Proton acceptor of the active site.

It belongs to the short-chain dehydrogenases/reductases (SDR) family.

Functionally, required for biosynthesis of LAH modification in the post-translational modification of Campylobacter coli flagellin. The chain is Post-translational flagellin modification protein A (ptmA) from Campylobacter coli.